A 702-amino-acid chain; its full sequence is Dynein intermediate chain 2, ciliary (702 aa).

Over residues 1–11 the composition is skewed to low complexity; it reads MPVKSTKTKGG. Disordered stretches follow at residues 1-64, 128-226, and 243-272; these read MPVK…IKPD, DEAR…FSST, and QEKA…ETQS. Basic and acidic residues-rich tracts occupy residues 36–52 and 152–176; these read GKKD…HGGE and GEEK…RDEE. Residues 189–206 are compositionally biased toward polar residues; the sequence is KLTNQFNFSERASQTYNN. The segment covering 243–261 has biased composition (basic and acidic residues); that stretch reads QEKAKEKKAAPSKKDDDKS. WD repeat units lie at residues 380-420, 429-472, 490-533, 537-577, 580-620, and 628-667; these read PTDS…ANPV, KHTD…LTYT, TQLT…QFLD, AHHM…GPMF, DLGS…YEPI, and KKKT…RKVP.

This sequence belongs to the dynein intermediate chain family. In terms of assembly, consists of at least two heavy chains (alpha and beta), three intermediate chains and several light chains.

The protein resides in the cytoplasm. Its subcellular location is the cytoskeleton. It localises to the cilium axoneme. Its function is as follows. Microtubule-binding protein that may be involved in dynein outer arm assembly on the axoneme. This chain is Dynein intermediate chain 2, ciliary, found in Heliocidaris crassispina (Sea urchin).